The chain runs to 1343 residues: Protein cordon-bleu (1343 aa).

6 disordered regions span residues 1 to 51 (MNLG…GDCK), 301 to 479 (KVEL…PAAE), 522 to 613 (VSVA…NGYE), 733 to 808 (IDKP…TRVL), 1056 to 1077 (EKPT…KSLD), and 1105 to 1148 (INNF…NVFG). A compositionally biased stretch (pro residues) spans 20 to 30 (APPPPRPPQPA). The KKRRAP 1 motif lies at 305-310 (KKRRAP). The span at 324–335 (SQISLGSPSSHN) shows a compositional bias: polar residues. A KKRRAP 2 motif is present at residues 338-343 (KKRKAP). A compositionally biased stretch (pro residues) spans 343-354 (PAPPPTPPPSTP). The segment covering 390-400 (DLSHSIEDSEP) has biased composition (basic and acidic residues). Positions 406–422 (SSSSGDDAAAVGSSSSS) are enriched in low complexity. Basic and acidic residues predominate over residues 445–460 (PEPKPEYEPELKKEAS). A compositionally biased stretch (polar residues) spans 552–573 (ERMQSVSPMDIMSLNSDSTLPV). Positions 746-757 (PSQDAKITDNME) are enriched in basic and acidic residues. Residues 773–789 (VELTSQKDTVLQKSQSF) show a composition bias toward polar residues. A compositionally biased stretch (polar residues) spans 1105-1122 (INNFPDTSSARQTPTDTT). Residues 1128–1137 (KKPELHKSEI) show a composition bias toward basic and acidic residues. WH2 domains are found at residues 1167–1187 (IHSS…LRKV) and 1207–1227 (ERSA…LKKT). A disordered region spans residues 1246 to 1297 (NVHTEVISPRPTSPDFVPPLPPSFSPPPPPPPPLAPAKPPVVLPPGGNPEAA). The segment covering 1261–1292 (FVPPLPPSFSPPPPPPPPLAPAKPPVVLPPGG) has biased composition (pro residues). One can recognise a WH2 3 domain in the interval 1297–1317 (AREALLEAIRSGSGAQQLRKV).

In terms of assembly, interacts with pacsin1.

It localises to the cell membrane. Its subcellular location is the cytoplasm. The protein resides in the cytoskeleton. It is found in the cell projection. The protein localises to the ruffle. It localises to the cytosol. In terms of biological role, plays an important role in the reorganization of the actin cytoskeleton. Binds to and sequesters actin monomers (G actin). Nucleates actin polymerization by assembling three actin monomers in cross-filament orientation and thereby promotes growth of actin filaments at the barbed end. Can also mediate actin depolymerization at barbed ends and severing of actin filaments. Promotes formation of cell ruffles. Regulates neuron morphogenesis and increases branching of axons and dendrites. Required for normal embryonic development, including normal development of laterality, normal body size and shape, as well as normal brain, heart and kidney development. Required for normal development of stereocilia and kinocilia in sensory hair cells of neuromasts in the posterior lateral line organ, and thus also for balance keeping and normal swimming behavior. The chain is Protein cordon-bleu (cobl) from Danio rerio (Zebrafish).